The primary structure comprises 162 residues: Phosphopantetheine adenylyltransferase (162 aa).

Serine 9 lines the substrate pocket. ATP is bound by residues 9-10 (SF) and histidine 17. Residues lysine 41, leucine 77, and lysine 91 each coordinate substrate. Residues 92 to 94 (GLR), glutamate 102, and 126 to 132 (YAFLSSS) contribute to the ATP site.

The protein belongs to the bacterial CoaD family. In terms of assembly, homohexamer. Mg(2+) serves as cofactor.

The protein localises to the cytoplasm. The catalysed reaction is (R)-4'-phosphopantetheine + ATP + H(+) = 3'-dephospho-CoA + diphosphate. Its pathway is cofactor biosynthesis; coenzyme A biosynthesis; CoA from (R)-pantothenate: step 4/5. Functionally, reversibly transfers an adenylyl group from ATP to 4'-phosphopantetheine, yielding dephospho-CoA (dPCoA) and pyrophosphate. The polypeptide is Phosphopantetheine adenylyltransferase (Parafrankia sp. (strain EAN1pec)).